The following is a 186-amino-acid chain: MSRLSIFPDGSTSMDQSSPTPLLVTETPAEIQAELARRGIGFEQWPALQELPLAADQSWILKAYANEIDRVKRDGGYATVDAIRMTPDHPERVALRSKFLAEHTHAEDEVRFFVEGRGLFCLHLGAEVLLTLCERGDLIRVPAGTKHWFDMGGQPAFCAVRWFNNAVGWVATFTGNTISERFPTLD.

Residues 1–21 form a disordered region; it reads MSRLSIFPDGSTSMDQSSPTP. Polar residues predominate over residues 10–20; it reads GSTSMDQSSPT. The Fe(2+) site is built by His103, His105, Glu109, and His147. Ni(2+) is bound by residues His103, His105, Glu109, and His147.

This sequence belongs to the acireductone dioxygenase (ARD) family. Monomer. Requires Fe(2+) as cofactor. The cofactor is Ni(2+).

It catalyses the reaction 1,2-dihydroxy-5-(methylsulfanyl)pent-1-en-3-one + O2 = 3-(methylsulfanyl)propanoate + CO + formate + 2 H(+). The catalysed reaction is 1,2-dihydroxy-5-(methylsulfanyl)pent-1-en-3-one + O2 = 4-methylsulfanyl-2-oxobutanoate + formate + 2 H(+). It functions in the pathway amino-acid biosynthesis; L-methionine biosynthesis via salvage pathway; L-methionine from S-methyl-5-thio-alpha-D-ribose 1-phosphate: step 5/6. Functionally, catalyzes 2 different reactions between oxygen and the acireductone 1,2-dihydroxy-3-keto-5-methylthiopentene (DHK-MTPene) depending upon the metal bound in the active site. Fe-containing acireductone dioxygenase (Fe-ARD) produces formate and 2-keto-4-methylthiobutyrate (KMTB), the alpha-ketoacid precursor of methionine in the methionine recycle pathway. Ni-containing acireductone dioxygenase (Ni-ARD) produces methylthiopropionate, carbon monoxide and formate, and does not lie on the methionine recycle pathway. The protein is Acireductone dioxygenase of Synechococcus sp. (strain CC9902).